We begin with the raw amino-acid sequence, 154 residues long: Snaclec lebecin subunit beta (154 aa).

A signal peptide spans 1-23 (MGRIIFVSFGLLVVFLSLSGTGA). Intrachain disulfides connect cysteine 25/cysteine 36, cysteine 53/cysteine 150, and cysteine 125/cysteine 142. The C-type lectin domain occupies 32–151 (DEEHCYYVFF…CGDDYPFVCK (120 aa)). Asparagine 139 carries an N-linked (GlcNAc...) asparagine glycan.

As to quaternary structure, heterodimer with the alpha subunit (AC W5XDM0); disulfide-linked. In terms of tissue distribution, expressed by the venom gland.

It is found in the secreted. Functionally, inhibits human breast cancer cells (MDA-MB231) migration and proliferation, as well as their adhesion to fibrinogen and fibronectin. This inhibition may be due to the binding to receptors of the integrin family, probably alpha-v/beta-3 (ITGAV/ITGB3) (40% inhibition of cell adhesion) and alpha-5/beta-1 (ITGA5/ITGB1) (by comparison with lebectin). The polypeptide is Snaclec lebecin subunit beta (Macrovipera lebetinus (Levantine viper)).